The sequence spans 302 residues: uncharacterized protein (302 aa).

Glu48 is a catalytic residue.

The protein belongs to the PhzF family.

This is an uncharacterized protein from Clostridium acetobutylicum (strain ATCC 824 / DSM 792 / JCM 1419 / IAM 19013 / LMG 5710 / NBRC 13948 / NRRL B-527 / VKM B-1787 / 2291 / W).